The primary structure comprises 263 residues: Lysine 5,6-aminomutase beta subunit (263 aa).

The B12-binding domain maps to 120-259 (EVVMVGASTG…TFILKEMVQR (140 aa)). Residues 130–136 (TDAHTVG) and H133 contribute to the adenosylcob(III)alamin site. An N6-(pyridoxal phosphate)lysine modification is found at K144. Adenosylcob(III)alamin contacts are provided by residues 185-192 (LVSQTVTQ), 219-223 (IAGGA), and 239-244 (FGPGKY).

Belongs to the KamE family. In terms of assembly, heterotetramer of 2 alpha and 2 beta subunits. The cofactor is adenosylcob(III)alamin. Pyridoxal 5'-phosphate is required as a cofactor.

It catalyses the reaction (3S)-3,6-diaminohexanoate = (3S,5S)-3,5-diaminohexanoate. The enzyme catalyses D-lysine = (2R,5S)-2,5-diaminohexanoate. It functions in the pathway amino-acid degradation; L-lysine degradation via acetate pathway. Catalyzes the migration of the L-beta-lysine and D-lysine epsilon amino group to the delta carbon to produce 3,5-diaminohexanoate and 2,5-diaminohexanoate, respectively. This is Lysine 5,6-aminomutase beta subunit from Fusobacterium nucleatum subsp. nucleatum (strain ATCC 25586 / DSM 15643 / BCRC 10681 / CIP 101130 / JCM 8532 / KCTC 2640 / LMG 13131 / VPI 4355).